A 139-amino-acid chain; its full sequence is Trafficking protein particle complex subunit 2-like protein (139 aa).

This sequence belongs to the TRAPP small subunits family. Sedlin subfamily. In terms of assembly, component of the multisubunit TRAPP (transport protein particle) complex, which includes at least TRAPPC2, TRAPPC2L, TRAPPC3, TRAPPC3L, TRAPPC4, TRAPPC5, TRAPPC8, TRAPPC9, TRAPPC10, TRAPPC11 and TRAPPC12. Interacts with the heterodimer TRAPPC3-TRAPPC6A.

The protein localises to the cytoplasm. It is found in the perinuclear region. Its subcellular location is the endoplasmic reticulum. The protein resides in the golgi apparatus. In terms of biological role, may play a role in vesicular transport from endoplasmic reticulum to Golgi. The polypeptide is Trafficking protein particle complex subunit 2-like protein (Trappc2l) (Mus musculus (Mouse)).